Consider the following 323-residue polypeptide: GTP 3',8-cyclase (323 aa).

The Radical SAM core domain maps to 4–228 (KYGRSIDYLR…VPVNIQNNGP (225 aa)). R13 contacts GTP. 2 residues coordinate [4Fe-4S] cluster: C20 and C24. Y26 contacts S-adenosyl-L-methionine. [4Fe-4S] cluster is bound at residue C27. Position 63 (R63) interacts with GTP. An S-adenosyl-L-methionine-binding site is contributed by G67. Position 94 (T94) interacts with GTP. An S-adenosyl-L-methionine-binding site is contributed by S118. A GTP-binding site is contributed by K155. An S-adenosyl-L-methionine-binding site is contributed by M189. C252 and C255 together coordinate [4Fe-4S] cluster. 257-259 (RMR) provides a ligand contact to GTP. C269 is a binding site for [4Fe-4S] cluster.

This sequence belongs to the radical SAM superfamily. MoaA family. Monomer and homodimer. The cofactor is [4Fe-4S] cluster.

It catalyses the reaction GTP + AH2 + S-adenosyl-L-methionine = (8S)-3',8-cyclo-7,8-dihydroguanosine 5'-triphosphate + 5'-deoxyadenosine + L-methionine + A + H(+). The protein operates within cofactor biosynthesis; molybdopterin biosynthesis. Its function is as follows. Catalyzes the cyclization of GTP to (8S)-3',8-cyclo-7,8-dihydroguanosine 5'-triphosphate. This is GTP 3',8-cyclase from Petrotoga mobilis (strain DSM 10674 / SJ95).